A 208-amino-acid chain; its full sequence is Ribosomal RNA large subunit methyltransferase E (208 aa).

Glycine 63, tryptophan 65, aspartate 83, aspartate 99, and aspartate 124 together coordinate S-adenosyl-L-methionine. Lysine 164 acts as the Proton acceptor in catalysis.

The protein belongs to the class I-like SAM-binding methyltransferase superfamily. RNA methyltransferase RlmE family.

The protein localises to the cytoplasm. The enzyme catalyses uridine(2552) in 23S rRNA + S-adenosyl-L-methionine = 2'-O-methyluridine(2552) in 23S rRNA + S-adenosyl-L-homocysteine + H(+). In terms of biological role, specifically methylates the uridine in position 2552 of 23S rRNA at the 2'-O position of the ribose in the fully assembled 50S ribosomal subunit. This Alcanivorax borkumensis (strain ATCC 700651 / DSM 11573 / NCIMB 13689 / SK2) protein is Ribosomal RNA large subunit methyltransferase E.